The chain runs to 119 residues: Dihydroneopterin aldolase (119 aa).

Substrate-binding positions include Glu21, Tyr53, and 72-73 (ID). Lys99 acts as the Proton donor/acceptor in catalysis.

This sequence belongs to the DHNA family.

It catalyses the reaction 7,8-dihydroneopterin = 6-hydroxymethyl-7,8-dihydropterin + glycolaldehyde. Its pathway is cofactor biosynthesis; tetrahydrofolate biosynthesis; 2-amino-4-hydroxy-6-hydroxymethyl-7,8-dihydropteridine diphosphate from 7,8-dihydroneopterin triphosphate: step 3/4. Functionally, catalyzes the conversion of 7,8-dihydroneopterin to 6-hydroxymethyl-7,8-dihydropterin. The chain is Dihydroneopterin aldolase (folB) from Streptococcus pyogenes.